The sequence spans 1469 residues: Chromosome condensation protein dpy-27 (1469 aa).

Positions 1–25 (MQPFKRRALTSDDDRPYADTDSMPE) are disordered. Residues 9 to 18 (LTSDDDRPYA) are compositionally biased toward basic and acidic residues. An ATP-binding site is contributed by 122–129 (GPNGSGKS). Residues 356–542 (ELEENKDIML…KGTLQTMMAE (187 aa)) are a coiled coil. The SMC hinge domain occupies 621 to 736 (PGFKGRLGDL…VDSLEEATRI (116 aa)). Residues 758-781 (GALTGGGKPTTGRIRNDNNPNMSG) are disordered. 3 coiled-coil regions span residues 805–974 (LKLQ…AQLE), 1016–1056 (AYQT…DIIE), and 1159–1182 (TSAKKFSDKLKAHREKLNELRMAR). The interval 1404–1469 (LPEFNRFPPA…VQRRVRRSRH (66 aa)) is disordered. Residues 1439–1449 (EEEDEEDELIE) show a composition bias toward acidic residues.

The protein belongs to the SMC family. SMC4 subfamily. In terms of assembly, component of the dosage compensation complex, which contains the mix-1/SMC2 and dpy-27/SMC4 heterodimer, and three non SMC subunits that probably regulate the complex: dpy-26, capg-1 and dpy-28. Within the complex, interacts with dpy-28, mix-1, dpy-26 and capg-1. Interacts with dpy-21. Interacts with dpy-28; the interaction is required for dpy-28 protein stability and dpy-28 association with the X chromosome. Interacts with smcl-1.

It is found in the nucleus. The protein resides in the chromosome. Its function is as follows. Central component of the condensin I-like dosage compensation complex that associates specifically with hermaphrodite X chromosomes to reduce their gene transcription throughout development. Its strong similarity with the condensin subunit smc4 suggests that it may reduce the X-chromosome transcript level by condensing the chromatin structure during interphase. Involved in the recruitment of the dosage compensation proteins mix-1 and dpy-21 to the X chromosome. Might be involved in the reduction of histone H4 lysine 16 acetylation (H4K16ac) on dosage compensated X chromosomes. As a member of the dosage compensation complex, also binds to regulatory regions of the autosomal her-1 gene, required for male development, possibly contributing to its repression in hermaphrodites. Also plays a role in the regulation of growth and body fat metabolism downstream of the TOR complex 2 pathway. The protein is Chromosome condensation protein dpy-27 (dpy-27) of Caenorhabditis elegans.